The sequence spans 622 residues: Chaperone protein HscA homolog (622 aa).

It belongs to the heat shock protein 70 family.

Chaperone involved in the maturation of iron-sulfur cluster-containing proteins. Has a low intrinsic ATPase activity which is markedly stimulated by HscB. This Verminephrobacter eiseniae (strain EF01-2) protein is Chaperone protein HscA homolog.